Here is a 240-residue protein sequence, read N- to C-terminus: Transcriptional activator protein VanR (240 aa).

Residues 169–234 enclose the HTH luxR-type domain; sequence DAKPRAVLTA…QAITKAILGG (66 aa). The segment at residues 193–212 is a DNA-binding region (H-T-H motif); the sequence is AWEIATIINTSERTVKFHFS.

The protein belongs to the autoinducer-regulated transcriptional regulatory protein family.

Probable transcriptional activator. Binds to autoinducer molecule ODHL. The sequence is that of Transcriptional activator protein VanR (vanR) from Vibrio anguillarum (Listonella anguillarum).